The chain runs to 348 residues: Phosphoribosylformylglycinamidine cyclo-ligase (348 aa).

Belongs to the AIR synthase family.

It localises to the cytoplasm. It carries out the reaction 2-formamido-N(1)-(5-O-phospho-beta-D-ribosyl)acetamidine + ATP = 5-amino-1-(5-phospho-beta-D-ribosyl)imidazole + ADP + phosphate + H(+). Its pathway is purine metabolism; IMP biosynthesis via de novo pathway; 5-amino-1-(5-phospho-D-ribosyl)imidazole from N(2)-formyl-N(1)-(5-phospho-D-ribosyl)glycinamide: step 2/2. The chain is Phosphoribosylformylglycinamidine cyclo-ligase from Ruegeria pomeroyi (strain ATCC 700808 / DSM 15171 / DSS-3) (Silicibacter pomeroyi).